Reading from the N-terminus, the 111-residue chain is Large ribosomal subunit protein eL33x (111 aa).

Belongs to the eukaryotic ribosomal protein eL33 family.

The polypeptide is Large ribosomal subunit protein eL33x (RPL35AD) (Arabidopsis thaliana (Mouse-ear cress)).